Here is a 520-residue protein sequence, read N- to C-terminus: MAKITSLIGSGIVAATNQVGPHVKHIPAVGNLQKQIVSDQIQVRWSSTETSLKNDISATDVRGYKGHDMLAPFTAGWHSTDLEPLVIQKSEGSYVYDVNGKKYLDALAGLWCTSLGGNEPRLVAAATKQLNELAFYHSFWNRSTKPSLDLAKELLDLFTANKMAKAFFTNSGSEANDTQVKLVWYYNNALGRPDKKKFIARTKSYHGSTLISASLSGLPALHQQFDLPAPFVLHTDCPHFWRFHQPGETEEEFSTRLANNLENLILKEGPETIAAFIAEPVMGAGGVIPPPATYFEKVQAILKKYDILFIADEVICGFGRLGTMFGCEKYNIKPDLVSVAKALSSGYMPIGAVLVSPEVSDVIYSQSNKLGTFSHGFTYSGHPVSCAVALETLKIYKERNIIEQVNRISPKFQEGLKAFSDSPIIGEIRGTGLLHGTEFTDNKSPNDPFPPEWGIGAYFGARCEKHGVLVRVAGDNIMMSPPYILSLEEIDELIIKYGKALKDTENRVEELKSQKKIKSS.

The transit peptide at 1-44 (MAKITSLIGSGIVAATNQVGPHVKHIPAVGNLQKQIVSDQIQVR) directs the protein to the chloroplast. Pyridoxal 5'-phosphate is bound at residue 172-173 (GS). Substrate is bound at residue tyrosine 205. Residue aspartate 312 coordinates pyridoxal 5'-phosphate. Lysine 341 is a binding site for substrate. At lysine 341 the chain carries N6-(pyridoxal phosphate)lysine.

This sequence belongs to the class-III pyridoxal-phosphate-dependent aminotransferase family. In terms of tissue distribution, expressed in leaves, roots, stems, flowers and fruits.

The protein resides in the plastid. It is found in the chloroplast. The catalysed reaction is 4-aminobutanoate + pyruvate = succinate semialdehyde + L-alanine. It catalyses the reaction 4-aminobutanoate + glyoxylate = succinate semialdehyde + glycine. In terms of biological role, transaminase that degrades gamma-amino butyric acid (GABA) and uses pyruvate or glyoxylate as amino-group acceptor. Cannot use beta-alanine, ornithine, acetylornithine, serine, glycine, asparagine, glutamine, glutamate, valine, leucine, isoleucine, methionine, phenylalanine, histidine, lysine, arginine, aspartate, threonine, tyrosine, tryptophan, proline, or cysteine as amino donors. This chain is Gamma aminobutyrate transaminase 3, chloroplastic (GABA-TP3), found in Solanum lycopersicum (Tomato).